Consider the following 298-residue polypeptide: N-acetylmuramic acid 6-phosphate etherase (298 aa).

The SIS domain occupies 55–218 (ASKRYREGGR…STGVMIKQGK (164 aa)). E83 acts as the Proton donor in catalysis. The active site involves E114.

The protein belongs to the GCKR-like family. MurNAc-6-P etherase subfamily. Homodimer.

It catalyses the reaction N-acetyl-D-muramate 6-phosphate + H2O = N-acetyl-D-glucosamine 6-phosphate + (R)-lactate. Its pathway is amino-sugar metabolism; N-acetylmuramate degradation. Functionally, specifically catalyzes the cleavage of the D-lactyl ether substituent of MurNAc 6-phosphate, producing GlcNAc 6-phosphate and D-lactate. The chain is N-acetylmuramic acid 6-phosphate etherase from Lactobacillus johnsonii (strain CNCM I-12250 / La1 / NCC 533).